Consider the following 375-residue polypeptide: Growth/differentiation factor 8 (375 aa).

The signal sequence occupies residues 1–23 (MQKLQIYVYIYLFMLIVAGPVDL). Positions 24–266 (NENSEQKENV…VTDTPKRSRR (243 aa)) are excised as a propeptide. N71 is a glycosylation site (N-linked (GlcNAc...) asparagine). Disulfide bonds link C272-C282, C281-C340, C309-C372, and C313-C374.

The protein belongs to the TGF-beta family. In terms of assembly, homodimer; disulfide-linked. Interacts with WFIKKN2, leading to inhibit its activity. Interacts with FSTL3. In terms of processing, synthesized as large precursor molecule that undergoes proteolytic cleavage to generate an N-terminal propeptide and a disulfide linked C-terminal dimer, which is the biologically active molecule. The circulating form consists of a latent complex of the C-terminal dimer and other proteins, including its propeptide, which maintain the C-terminal dimer in a latent, inactive state. Ligand activation requires additional cleavage of the prodomain by a tolloid-like metalloproteinase.

It localises to the secreted. Its function is as follows. Acts specifically as a negative regulator of skeletal muscle growth. The chain is Growth/differentiation factor 8 (MSTN) from Sus scrofa (Pig).